Consider the following 2381-residue polypeptide: Myb-like protein U (2381 aa).

4 disordered regions span residues M1–N85, S148–S167, P178–N492, and N641–M696. Composition is skewed to low complexity over residues S30–S41 and T64–T79. Low complexity-rich tracts occupy residues N192 to S204, E225 to S261, and S291 to K315. A compositionally biased stretch (acidic residues) spans S331–L343. Positions T363–S405 are enriched in low complexity. Polar residues predominate over residues S421–K430. Composition is skewed to low complexity over residues Q435–N492 and N641–N692. The Myb-like domain maps to W856–R899. Disordered stretches follow at residues K932–P1024, I1068–P1093, T1145–E1207, S1295–D1339, P1422–P1474, P1597–V1647, P1667–V1849, T1961–A1985, T2055–T2106, and L2122–D2280. Residues N936–G953 show a composition bias toward low complexity. Positions V982–R995 are enriched in basic residues. Positions A1000–P1013 are enriched in polar residues. Low complexity-rich tracts occupy residues N1069–N1092, T1145–A1186, V1195–N1205, and T1306–Q1325. Residues L1326 to P1337 are compositionally biased toward pro residues. A compositionally biased stretch (low complexity) spans P1427–P1474. Residues P1597–P1606 are compositionally biased toward pro residues. The span at S1618–S1637 shows a compositional bias: low complexity. Polar residues-rich tracts occupy residues T1638–V1647 and Q1671–L1701. Low complexity-rich tracts occupy residues P1702–S1735 and T1743–P1809. Over residues A1829–T1844 the composition is skewed to polar residues. 2 stretches are compositionally biased toward low complexity: residues T1961 to T1970 and N2065 to T2097. The span at N2129 to P2138 shows a compositional bias: polar residues. The span at P2154–P2209 shows a compositional bias: low complexity. The span at K2210–K2278 shows a compositional bias: basic and acidic residues.

In Dictyostelium discoideum (Social amoeba), this protein is Myb-like protein U (mybU).